Consider the following 159-residue polypeptide: MCCNYYGNSCGYGCGYGSGYGSGYGCGSGSGYGCGYGSGYGCGYGSGYGCGSGSGYGCGYGSGYGCGYGSGYGCGYGSGYGCGYGSGYGCGYGSGYGCGYGSGYGCGYGSGYGCGYGSGYGSGYGSGYGSGCGCGYGSYYRSGCCGYGPSCYRRCYSCC.

Residues 11-147 form a 66 X 2 AA repeats of G-[YCGS] region; it reads GYGCGYGSGY…SYYRSGCCGY (137 aa).

Belongs to the KRTAP type 6 family. In terms of assembly, interacts with hair keratins. Expressed in skin during two hair growth cycles. Expression restricted to the cortical cells of hair follicles, appearing first in the cortical cells processing the flat nuclei located a few cells above the dermal papilla.

Its function is as follows. In the hair cortex, hair keratin intermediate filaments are embedded in an interfilamentous matrix, consisting of hair keratin-associated proteins (KRTAP), which are essential for the formation of a rigid and resistant hair shaft through their extensive disulfide bond cross-linking with abundant cysteine residues of hair keratins. The matrix proteins include the high-sulfur and high-glycine-tyrosine keratins. The chain is Keratin-associated protein 6-2 from Mus musculus (Mouse).